The following is a 114-amino-acid chain: C-X-C motif chemokine 5 (114 aa).

The first 36 residues, 1-36, serve as a signal peptide directing secretion; it reads MSLLSSRAARVPGPSSSLCALLVLLLLLTQPGPIAS. Disulfide bonds link C49-C75 and C51-C91.

The protein belongs to the intercrine alpha (chemokine CxC) family. As to quaternary structure, monomer. Homodimer. N-terminal processed forms ENA-78(8-78) and ENA-78(9-78) are produced by proteolytic cleavage after secretion from peripheral blood monocytes.

It is found in the secreted. In terms of biological role, involved in neutrophil activation. In vitro, ENA-78(8-78) and ENA-78(9-78) show a threefold higher chemotactic activity for neutrophil granulocytes. In Homo sapiens (Human), this protein is C-X-C motif chemokine 5 (CXCL5).